The sequence spans 775 residues: Aconitate hydratase, mitochondrial (775 aa).

The transit peptide at 1–25 directs the protein to the mitochondrion; the sequence is MLTTLARASAMLLGARGFASAADLD. Residues glutamine 95 and 188-190 contribute to the substrate site; that span reads DSH. Asparagine 337 carries N-linked (GlcNAc...) asparagine glycosylation. Cysteine 381 provides a ligand contact to [4Fe-4S] cluster. N-linked (GlcNAc...) asparagine glycosylation is present at asparagine 383. Residues cysteine 444 and cysteine 447 each contribute to the [4Fe-4S] cluster site. Arginine 470 serves as a coordination point for substrate. Asparagine 471 is a glycosylation site (N-linked (GlcNAc...) asparagine). 2 residues coordinate substrate: arginine 475 and arginine 603. Asparagine 608 carries an N-linked (GlcNAc...) asparagine glycan. Position 666-667 (666-667) interacts with substrate; that stretch reads SR. Asparagine 754 and asparagine 763 each carry an N-linked (GlcNAc...) asparagine glycan.

It belongs to the aconitase/IPM isomerase family. As to quaternary structure, monomer. The cofactor is [4Fe-4S] cluster.

It is found in the mitochondrion. The catalysed reaction is citrate = D-threo-isocitrate. Its pathway is carbohydrate metabolism; tricarboxylic acid cycle; isocitrate from oxaloacetate: step 2/2. In terms of biological role, catalyzes the isomerization of citrate to isocitrate via cis-aconitate. This Arthroderma benhamiae (strain ATCC MYA-4681 / CBS 112371) (Trichophyton mentagrophytes) protein is Aconitate hydratase, mitochondrial.